Here is a 332-residue protein sequence, read N- to C-terminus: Methionine import ATP-binding protein MetN (332 aa).

The ABC transporter domain occupies 2–239 (ITFQDVSKTY…PASDTARRFV (238 aa)). 36 to 43 (GASGAGKS) contacts ATP.

This sequence belongs to the ABC transporter superfamily. Methionine importer (TC 3.A.1.24) family. As to quaternary structure, the complex is composed of two ATP-binding proteins (MetN), two transmembrane proteins (MetI) and a solute-binding protein (MetQ).

The protein localises to the cell inner membrane. It carries out the reaction L-methionine(out) + ATP + H2O = L-methionine(in) + ADP + phosphate + H(+). It catalyses the reaction D-methionine(out) + ATP + H2O = D-methionine(in) + ADP + phosphate + H(+). In terms of biological role, part of the ABC transporter complex MetNIQ involved in methionine import. Responsible for energy coupling to the transport system. The protein is Methionine import ATP-binding protein MetN of Caulobacter vibrioides (strain ATCC 19089 / CIP 103742 / CB 15) (Caulobacter crescentus).